A 142-amino-acid polypeptide reads, in one-letter code: Large ribosomal subunit protein uL16 (142 aa).

It belongs to the universal ribosomal protein uL16 family. As to quaternary structure, part of the 50S ribosomal subunit.

Binds 23S rRNA and is also seen to make contacts with the A and possibly P site tRNAs. The chain is Large ribosomal subunit protein uL16 from Gemmatimonas aurantiaca (strain DSM 14586 / JCM 11422 / NBRC 100505 / T-27).